The following is a 360-amino-acid chain: Photosystem II protein D1 (360 aa).

3 helical membrane-spanning segments follow: residues tyrosine 30 to threonine 47, histidine 119 to leucine 134, and tryptophan 143 to alanine 157. Histidine 119 is a chlorophyll a binding site. Pheophytin a is bound at residue tyrosine 127. [CaMn4O5] cluster-binding residues include aspartate 171 and glutamate 190. The helical transmembrane segment at phenylalanine 198–leucine 219 threads the bilayer. Histidine 199 provides a ligand contact to chlorophyll a. A quinone-binding positions include histidine 216 and serine 265–phenylalanine 266. Histidine 216 provides a ligand contact to Fe cation. Residue histidine 273 coordinates Fe cation. Residues phenylalanine 275–methionine 289 form a helical membrane-spanning segment. Residues histidine 333, glutamate 334, aspartate 343, and alanine 345 each coordinate [CaMn4O5] cluster. Positions alanine 346–glycine 360 are excised as a propeptide.

Belongs to the reaction center PufL/M/PsbA/D family. PSII is composed of 1 copy each of membrane proteins PsbA, PsbB, PsbC, PsbD, PsbE, PsbF, PsbH, PsbI, PsbJ, PsbK, PsbL, PsbM, PsbT, PsbX, PsbY, Psb30/Ycf12, peripheral proteins PsbO, CyanoQ (PsbQ), PsbU, PsbV and a large number of cofactors. It forms dimeric complexes. Requires The D1/D2 heterodimer binds P680, chlorophylls that are the primary electron donor of PSII, and subsequent electron acceptors. It shares a non-heme iron and each subunit binds pheophytin, quinone, additional chlorophylls, carotenoids and lipids. D1 provides most of the ligands for the Mn4-Ca-O5 cluster of the oxygen-evolving complex (OEC). There is also a Cl(-1) ion associated with D1 and D2, which is required for oxygen evolution. The PSII complex binds additional chlorophylls, carotenoids and specific lipids. as cofactor. In terms of processing, tyr-162 forms a radical intermediate that is referred to as redox-active TyrZ, YZ or Y-Z. Post-translationally, C-terminally processed by CtpA; processing is essential to allow assembly of the oxygen-evolving complex and thus photosynthetic growth.

It is found in the cellular thylakoid membrane. The enzyme catalyses 2 a plastoquinone + 4 hnu + 2 H2O = 2 a plastoquinol + O2. Photosystem II (PSII) is a light-driven water:plastoquinone oxidoreductase that uses light energy to abstract electrons from H(2)O, generating O(2) and a proton gradient subsequently used for ATP formation. It consists of a core antenna complex that captures photons, and an electron transfer chain that converts photonic excitation into a charge separation. The D1/D2 (PsbA/PsbD) reaction center heterodimer binds P680, the primary electron donor of PSII as well as several subsequent electron acceptors. This is Photosystem II protein D1 from Prochlorococcus marinus (strain NATL1A).